The chain runs to 372 residues: uncharacterized protein (372 aa).

The interval Lys328–Gln353 is disordered.

Induces the SOS system when expressed in E.coli, therefore, it may play a role in DNA metabolism and/or in genome stability. This is an uncharacterized protein from Saccharomyces cerevisiae (strain ATCC 204508 / S288c) (Baker's yeast).